Consider the following 183-residue polypeptide: MTAQGGLVANRGRRFKWAIELSGPGGGSRGRSDRGSGQGDSLYPVGYLDKQVPDTSVQETDRILVEKRCWDIALGPLKQIPMNLFIMYMAGNTISIFPTMMVCMMAWRPIQALMAISATFKMLESSSQKFLQGLVYLIGNLMGLALAVYKCQSMGLLPTHASDWLAFIEPPERMEFSGGGLLL.

Residue threonine 2 is modified to N-acetylthreonine. Topologically, residues 2–66 (TAQGGLVANR…VQETDRILVE (65 aa)) are cytoplasmic. The tract at residues 20–39 (ELSGPGGGSRGRSDRGSGQG) is disordered. Serine 36 is subject to Phosphoserine. Residues 67 to 87 (KRCWDIALGPLKQIPMNLFIM) traverse the membrane as a helical segment. At 88–98 (YMAGNTISIFP) the chain is on the lumenal side. A helical transmembrane segment spans residues 99-120 (TMMVCMMAWRPIQALMAISATF). Topologically, residues 121 to 127 (KMLESSS) are cytoplasmic. The chain crosses the membrane as a helical span at residues 128 to 148 (QKFLQGLVYLIGNLMGLALAV). Residues 149-183 (YKCQSMGLLPTHASDWLAFIEPPERMEFSGGGLLL) are Lumenal-facing.

It belongs to the EMC4 family. Component of the ER membrane protein complex (EMC). As to expression, isoform 1 is expressed in brain and heart. Isoform 2 is expressed in heart.

It localises to the endoplasmic reticulum membrane. In terms of biological role, part of the endoplasmic reticulum membrane protein complex (EMC) that enables the energy-independent insertion into endoplasmic reticulum membranes of newly synthesized membrane proteins. Preferentially accommodates proteins with transmembrane domains that are weakly hydrophobic or contain destabilizing features such as charged and aromatic residues. Involved in the cotranslational insertion of multi-pass membrane proteins in which stop-transfer membrane-anchor sequences become ER membrane spanning helices. It is also required for the post-translational insertion of tail-anchored/TA proteins in endoplasmic reticulum membranes. By mediating the proper cotranslational insertion of N-terminal transmembrane domains in an N-exo topology, with translocated N-terminus in the lumen of the ER, controls the topology of multi-pass membrane proteins like the G protein-coupled receptors. By regulating the insertion of various proteins in membranes, it is indirectly involved in many cellular processes. The sequence is that of ER membrane protein complex subunit 4 (EMC4) from Homo sapiens (Human).